The primary structure comprises 353 residues: Rhodopsin (353 aa).

The Extracellular portion of the chain corresponds to 1–36 (MNGTEGPYFYIPMVNTTGIVRSPYEYPQYYLVNPAA). 2 N-linked (GlcNAc...) asparagine glycosylation sites follow: asparagine 2 and asparagine 15. A helical transmembrane segment spans residues 37–61 (YAALGAYMFLLILIGFPVNFLTLYV). At 62–73 (TIEHKKLRTPLN) the chain is on the cytoplasmic side. The chain crosses the membrane as a helical span at residues 74-96 (YILLNLAVADLFMVFGGFTTTMY). The Extracellular portion of the chain corresponds to 97 to 110 (TSMHGYFVLGRLGC). Residues cysteine 110 and cysteine 187 are joined by a disulfide bond. A helical membrane pass occupies residues 111-133 (NLEGFFATLGGEIALWSLVVLAV). Residues 134–136 (ERW) carry the 'Ionic lock' involved in activated form stabilization motif. Residues 134 to 152 (ERWMVVCKPISNFRFGEDH) lie on the Cytoplasmic side of the membrane. The helical transmembrane segment at 153–173 (AIMGLAFTWVMAAACAVPPLV) threads the bilayer. The Extracellular portion of the chain corresponds to 174–202 (GWSRYIPEGMQCSCGIDYYTRAEGFNNES). The N-linked (GlcNAc...) asparagine glycan is linked to asparagine 200. A helical transmembrane segment spans residues 203–224 (FVIYMFVCHFLIPLVVVFFCYG). Over 225 to 252 (RLLCAVKEAAAAQQESETTQRAEREVSR) the chain is Cytoplasmic. A helical membrane pass occupies residues 253–274 (MVVIMVVAFLVCWCPYAGVAWY). Residues 275 to 286 (IFTHQGSEFGPL) are Extracellular-facing. The helical transmembrane segment at 287 to 308 (FMTFPAFFAKSSSIYNPMIYIC) threads the bilayer. Lysine 296 is modified (N6-(retinylidene)lysine). The Cytoplasmic portion of the chain corresponds to 309 to 353 (MNKQFRQCMITTLCCGKNPFEEEEGASTTSKTEASSVSSSSVSPA). S-palmitoyl cysteine attachment occurs at residues cysteine 322 and cysteine 323. A disordered region spans residues 329–353 (EEEEGASTTSKTEASSVSSSSVSPA). Low complexity predominate over residues 334 to 353 (ASTTSKTEASSVSSSSVSPA).

It belongs to the G-protein coupled receptor 1 family. Opsin subfamily. Post-translationally, phosphorylated on some or all of the serine and threonine residues present in the C-terminal region. In terms of processing, contains one covalently linked retinal chromophore.

Its subcellular location is the membrane. The protein localises to the cell projection. It is found in the cilium. It localises to the photoreceptor outer segment. Photoreceptor required for image-forming vision at low light intensity. While most salt water fish species use retinal as chromophore, most freshwater fish use 3-dehydroretinal, or a mixture of retinal and 3-dehydroretinal. Light-induced isomerization of 11-cis to all-trans retinal triggers a conformational change that activates signaling via G-proteins. Subsequent receptor phosphorylation mediates displacement of the bound G-protein alpha subunit by arrestin and terminates signaling. In Chelon auratus (Golden grey mullet), this protein is Rhodopsin (rho).